The following is a 565-amino-acid chain: MADNRRSRVITQGVARTPNRAMLRAVGFRDEDFEKPIIGVGNAHSTITPCNVGIGAMARRAEEALREVGAMPMKFGTITVSDGITMGTEGMKYSLVSREVIADSIETVGGGQRMDGMLATGGCDKNMPGAMMALARLDIPGIFVYGGTIKPGHYKGEDLTVVSAFEAVGQYNAGNLSEADLKGVEENACPGAGACGGMFTANTMSSAFEAMGMSLMGSSTVSAEDDEARDVAAEASRVLMDAVHHDRRPSSILTREAFENAFAVVMALGGSTNAVLHLLAIANTAEVPFDLDDVERIRRKVPVLCDLKPSGRFVTSQFHEVGGTPQVMRILLEQGLLHGHCQTITGQTIEALIGHLPPEPPADQEIIMPFDRPLYPEGHLAILRGNLAEEGAVAKVSGIQQRRISGPARVFDSEEECLEAILADGVQAGDVVIVRYEGPKGGPGMREMLAPTSAIIGKGLGDAVGLITDGRFSGGTYGMVVGHVAPEAYDGGTIALIAEGDTVTIDADQNLLQVEVDDAELERRRSQWQVPRPRYRRGVLGKYARLAASASRGAVTDADLFPEQE.

C50 provides a ligand contact to [2Fe-2S] cluster. A Mg(2+)-binding site is contributed by D82. C123 provides a ligand contact to [2Fe-2S] cluster. Residues D124 and K125 each contribute to the Mg(2+) site. At K125 the chain carries N6-carboxylysine. C195 provides a ligand contact to [2Fe-2S] cluster. Residue E447 coordinates Mg(2+). Catalysis depends on S473, which acts as the Proton acceptor.

This sequence belongs to the IlvD/Edd family. In terms of assembly, homodimer. [2Fe-2S] cluster serves as cofactor. It depends on Mg(2+) as a cofactor.

The enzyme catalyses (2R)-2,3-dihydroxy-3-methylbutanoate = 3-methyl-2-oxobutanoate + H2O. The catalysed reaction is (2R,3R)-2,3-dihydroxy-3-methylpentanoate = (S)-3-methyl-2-oxopentanoate + H2O. It functions in the pathway amino-acid biosynthesis; L-isoleucine biosynthesis; L-isoleucine from 2-oxobutanoate: step 3/4. The protein operates within amino-acid biosynthesis; L-valine biosynthesis; L-valine from pyruvate: step 3/4. Functions in the biosynthesis of branched-chain amino acids. Catalyzes the dehydration of (2R,3R)-2,3-dihydroxy-3-methylpentanoate (2,3-dihydroxy-3-methylvalerate) into 2-oxo-3-methylpentanoate (2-oxo-3-methylvalerate) and of (2R)-2,3-dihydroxy-3-methylbutanoate (2,3-dihydroxyisovalerate) into 2-oxo-3-methylbutanoate (2-oxoisovalerate), the penultimate precursor to L-isoleucine and L-valine, respectively. This Halorhodospira halophila (strain DSM 244 / SL1) (Ectothiorhodospira halophila (strain DSM 244 / SL1)) protein is Dihydroxy-acid dehydratase.